The chain runs to 238 residues: Large ribosomal subunit protein uL1 (238 aa).

This sequence belongs to the universal ribosomal protein uL1 family. Part of the 50S ribosomal subunit.

Its function is as follows. Binds directly to 23S rRNA. The L1 stalk is quite mobile in the ribosome, and is involved in E site tRNA release. In terms of biological role, protein L1 is also a translational repressor protein, it controls the translation of the L11 operon by binding to its mRNA. The chain is Large ribosomal subunit protein uL1 from Picosynechococcus sp. (strain ATCC 27264 / PCC 7002 / PR-6) (Agmenellum quadruplicatum).